Here is a 208-residue protein sequence, read N- to C-terminus: High frequency lysogenization protein HflD homolog (208 aa).

The stretch at Leu91–Glu125 forms a coiled coil.

This sequence belongs to the HflD family.

It is found in the cytoplasm. Its subcellular location is the cell inner membrane. The polypeptide is High frequency lysogenization protein HflD homolog (Serratia proteamaculans (strain 568)).